Here is a 343-residue protein sequence, read N- to C-terminus: 4-hydroxy-3-methylbut-2-enyl diphosphate reductase (343 aa).

Cysteine 18 is a binding site for [4Fe-4S] cluster. (2E)-4-hydroxy-3-methylbut-2-enyl diphosphate-binding residues include histidine 47 and histidine 83. Histidine 47 and histidine 83 together coordinate dimethylallyl diphosphate. Histidine 47 and histidine 83 together coordinate isopentenyl diphosphate. Cysteine 105 is a binding site for [4Fe-4S] cluster. Histidine 133 provides a ligand contact to (2E)-4-hydroxy-3-methylbut-2-enyl diphosphate. Histidine 133 serves as a coordination point for dimethylallyl diphosphate. Histidine 133 serves as a coordination point for isopentenyl diphosphate. The Proton donor role is filled by glutamate 135. Threonine 174 contacts (2E)-4-hydroxy-3-methylbut-2-enyl diphosphate. Cysteine 204 is a binding site for [4Fe-4S] cluster. Positions 232, 233, 234, and 277 each coordinate (2E)-4-hydroxy-3-methylbut-2-enyl diphosphate. 4 residues coordinate dimethylallyl diphosphate: serine 232, serine 233, asparagine 234, and serine 277. 4 residues coordinate isopentenyl diphosphate: serine 232, serine 233, asparagine 234, and serine 277.

Belongs to the IspH family. [4Fe-4S] cluster is required as a cofactor.

It carries out the reaction isopentenyl diphosphate + 2 oxidized [2Fe-2S]-[ferredoxin] + H2O = (2E)-4-hydroxy-3-methylbut-2-enyl diphosphate + 2 reduced [2Fe-2S]-[ferredoxin] + 2 H(+). The enzyme catalyses dimethylallyl diphosphate + 2 oxidized [2Fe-2S]-[ferredoxin] + H2O = (2E)-4-hydroxy-3-methylbut-2-enyl diphosphate + 2 reduced [2Fe-2S]-[ferredoxin] + 2 H(+). It participates in isoprenoid biosynthesis; dimethylallyl diphosphate biosynthesis; dimethylallyl diphosphate from (2E)-4-hydroxy-3-methylbutenyl diphosphate: step 1/1. The protein operates within isoprenoid biosynthesis; isopentenyl diphosphate biosynthesis via DXP pathway; isopentenyl diphosphate from 1-deoxy-D-xylulose 5-phosphate: step 6/6. Functionally, catalyzes the conversion of 1-hydroxy-2-methyl-2-(E)-butenyl 4-diphosphate (HMBPP) into a mixture of isopentenyl diphosphate (IPP) and dimethylallyl diphosphate (DMAPP). Acts in the terminal step of the DOXP/MEP pathway for isoprenoid precursor biosynthesis. In Bartonella henselae (strain ATCC 49882 / DSM 28221 / CCUG 30454 / Houston 1) (Rochalimaea henselae), this protein is 4-hydroxy-3-methylbut-2-enyl diphosphate reductase.